The following is a 492-amino-acid chain: Transmembrane protein 39B (492 aa).

The tract at residues 1-53 (MGGRRGPNRTSYYRNPLCEPGSSGASGGGHSSSASVSSVRSRSRTTSGTGLSS) is disordered. Residue Asn8 is glycosylated (N-linked (GlcNAc...) asparagine). The span at 31-53 (SSSASVSSVRSRSRTTSGTGLSS) shows a compositional bias: low complexity. 8 helical membrane passes run 77–97 (SILF…VHYI), 115–135 (TSLN…IVLG), 153–175 (SLFR…GWSL), 185–205 (TYSF…IPFL), 288–308 (EVLV…VWFV), 322–342 (LFLL…LPAS), 421–441 (ILNI…YSLM), and 447–467 (HQTI…FKLL).

It belongs to the TMEM39 family.

It localises to the endoplasmic reticulum membrane. Functionally, may protect the cells against DNA damage caused by exposure to the cold-warming stress and facilitates tissue damage repair during the recovery phase. This Mus musculus (Mouse) protein is Transmembrane protein 39B.